The primary structure comprises 455 residues: Fumarate hydratase class II (455 aa).

Residues 96–98, 122–125, 132–134, and Thr-180 each bind substrate; these read SGT, HPND, and SSN. Catalysis depends on His-181, which acts as the Proton donor/acceptor. Ser-311 is an active-site residue. Substrate is bound by residues Ser-312 and 317–319; that span reads KVN.

The protein belongs to the class-II fumarase/aspartase family. Fumarase subfamily. In terms of assembly, homotetramer.

Its subcellular location is the cytoplasm. The catalysed reaction is (S)-malate = fumarate + H2O. The protein operates within carbohydrate metabolism; tricarboxylic acid cycle; (S)-malate from fumarate: step 1/1. Its function is as follows. Involved in the TCA cycle. Catalyzes the stereospecific interconversion of fumarate to L-malate. The chain is Fumarate hydratase class II from Listeria monocytogenes serovar 1/2a (strain ATCC BAA-679 / EGD-e).